The following is a 309-amino-acid chain: Ribonuclease Z (309 aa).

Zn(2+) contacts are provided by His-63, His-65, Asp-67, His-68, His-141, Asp-212, and His-270. The active-site Proton acceptor is Asp-67.

This sequence belongs to the RNase Z family. Homodimer. Zn(2+) serves as cofactor.

It carries out the reaction Endonucleolytic cleavage of RNA, removing extra 3' nucleotides from tRNA precursor, generating 3' termini of tRNAs. A 3'-hydroxy group is left at the tRNA terminus and a 5'-phosphoryl group is left at the trailer molecule.. In terms of biological role, zinc phosphodiesterase, which displays some tRNA 3'-processing endonuclease activity. Probably involved in tRNA maturation, by removing a 3'-trailer from precursor tRNA. The polypeptide is Ribonuclease Z (Lactobacillus gasseri (strain ATCC 33323 / DSM 20243 / BCRC 14619 / CIP 102991 / JCM 1131 / KCTC 3163 / NCIMB 11718 / NCTC 13722 / AM63)).